Here is a 474-residue protein sequence, read N- to C-terminus: Shugoshin-1 (474 aa).

Disordered regions lie at residues 1–53, 189–226, 322–356, and 422–442; these read MTST…KPNA, VESQ…NQGS, NSKQ…RCSK, and VSME…RKSN. Polar residues-rich tracts occupy residues 12–22 and 190–201; these read GSLNPPHSNPS and ESQSAVSSNTVC. Positions 211–220 are enriched in basic residues; that stretch reads KRMPQRRRSS. 2 stretches are compositionally biased toward polar residues: residues 322-341 and 422-431; these read NSKQ…NTVD and VSMEQRTNQE.

It belongs to the shugoshin family. In terms of tissue distribution, highly expressed in tissues containing meiocytes. Expressed at much lower level in leaves and pollen-containing flowers.

The protein resides in the nucleus. Its subcellular location is the chromosome. It localises to the centromere. Functionally, plays a central role in chromosome cohesion during meiosis I by preventing premature dissociation of cohesin complex from centromeres after prophase, when most of cohesin complex dissociates from chromosomes arms. Required for maintenance of centromeric cohesion before prophase II and correct segregation of chromatids during meiosis II. Has apparently no function in mitosis. This chain is Shugoshin-1, found in Zea mays (Maize).